Reading from the N-terminus, the 156-residue chain is C-type lectin lectoxin-Phi1 (156 aa).

The signal sequence occupies residues 1–23 (MGRFIFVSLGLLVLAFSLSGIGA). 3 disulfides stabilise this stretch: Cys-27–Cys-38, Cys-55–Cys-154, and Cys-129–Cys-146. The C-type lectin domain occupies 34–155 (HNVSCYKLIN…CNRRHRFLCK (122 aa)). N-linked (GlcNAc...) asparagine glycosylation is found at Asn-35 and Asn-109. Positions 119 to 121 (EPN) match the Mannose-binding motif. 3 residues coordinate Ca(2+): Glu-127, Asn-142, and Asp-143.

The protein belongs to the true venom lectin family. In terms of tissue distribution, expressed by the venom gland.

The protein localises to the secreted. Functionally, mannose-binding lectin which recognizes specific carbohydrate structures and agglutinates a variety of animal cells by binding to cell-surface glycoproteins and glycolipids. May be a calcium-dependent lectin. The chain is C-type lectin lectoxin-Phi1 from Philodryas olfersii (Green snake).